The chain runs to 317 residues: L-lactate dehydrogenase (317 aa).

NAD(+)-binding positions include V17, D38, K43, Y68, and 82-83 (GV). Position 91 (R91) interacts with substrate. NAD(+) is bound by residues S104, 121-123 (VSN), and S146. 123 to 126 (NPVD) contributes to the substrate binding site. 151–154 (DTSR) contributes to the substrate binding site. The beta-D-fructose 1,6-bisphosphate site is built by K156 and H171. Catalysis depends on H178, which acts as the Proton acceptor. Phosphotyrosine is present on Y224. T233 provides a ligand contact to substrate.

Belongs to the LDH/MDH superfamily. LDH family. As to quaternary structure, homotetramer.

The protein resides in the cytoplasm. The catalysed reaction is (S)-lactate + NAD(+) = pyruvate + NADH + H(+). It participates in fermentation; pyruvate fermentation to lactate; (S)-lactate from pyruvate: step 1/1. Its activity is regulated as follows. Allosterically activated by fructose 1,6-bisphosphate (FBP). In terms of biological role, catalyzes the conversion of lactate to pyruvate. The sequence is that of L-lactate dehydrogenase from Clostridium perfringens (strain ATCC 13124 / DSM 756 / JCM 1290 / NCIMB 6125 / NCTC 8237 / Type A).